We begin with the raw amino-acid sequence, 244 residues long: Carboxy-S-adenosyl-L-methionine synthase (244 aa).

S-adenosyl-L-methionine contacts are provided by residues Tyr40, 65–67, 90–91, Asn134, and Arg201; these read GCS and DN.

It belongs to the class I-like SAM-binding methyltransferase superfamily. Cx-SAM synthase family. Homodimer.

The enzyme catalyses prephenate + S-adenosyl-L-methionine = carboxy-S-adenosyl-L-methionine + 3-phenylpyruvate + H2O. In terms of biological role, catalyzes the conversion of S-adenosyl-L-methionine (SAM) to carboxy-S-adenosyl-L-methionine (Cx-SAM). The protein is Carboxy-S-adenosyl-L-methionine synthase of Citrifermentans bemidjiense (strain ATCC BAA-1014 / DSM 16622 / JCM 12645 / Bem) (Geobacter bemidjiensis).